Reading from the N-terminus, the 239-residue chain is Ribosomal RNA small subunit methyltransferase G (239 aa).

S-adenosyl-L-methionine is bound by residues glycine 95, leucine 100, 118 to 120 (EAT), 146 to 147 (AE), and arginine 164.

This sequence belongs to the methyltransferase superfamily. RNA methyltransferase RsmG family.

It localises to the cytoplasm. The enzyme catalyses guanosine(527) in 16S rRNA + S-adenosyl-L-methionine = N(7)-methylguanosine(527) in 16S rRNA + S-adenosyl-L-homocysteine. Its function is as follows. Specifically methylates the N7 position of guanine in position 527 of 16S rRNA. This is Ribosomal RNA small subunit methyltransferase G from Sorangium cellulosum (strain So ce56) (Polyangium cellulosum (strain So ce56)).